Here is a 350-residue protein sequence, read N- to C-terminus: Arginine/serine-rich coiled-coil protein 2 (350 aa).

Disordered stretches follow at residues 1 to 146 (MIRT…FRGR) and 328 to 350 (SQTH…MDAV). Residues 10-24 (QARRHEVKAKSSKKH) are compositionally biased toward basic residues. Positions 25 to 51 (RSDDTVDRDHSDKIRDRLNSSENGDEK) are enriched in basic and acidic residues. Residues 52-132 (HRRKEKRSSR…IEKPRRHSRS (81 aa)) are compositionally biased toward basic residues. The stretch at 146-187 (RNAAMDAQEALARRLERAKKLQEQREKESAEKQQEIAAVAAA) forms a coiled coil.

Belongs to the RSRC2 family.

The sequence is that of Arginine/serine-rich coiled-coil protein 2 (rsrc2) from Xenopus laevis (African clawed frog).